We begin with the raw amino-acid sequence, 1010 residues long: Sodium/potassium-transporting ATPase subunit alpha-3 (1010 aa).

Positions 1–21 (MGDKDDRFPKKKKGGTKDMDA) are disordered. The Cytoplasmic portion of the chain corresponds to 1-74 (MGDKDDRFPK…NALTPPPTTP (74 aa)). Residues 69-71 (PPP) form an interaction with phosphoinositide-3 kinase region. A helical transmembrane segment spans residues 75 to 95 (EWVKFCRQLFGGFSILLWTGA). The Extracellular portion of the chain corresponds to 96 to 118 (ILCFLAYAIQAATEDEPAGDNLY). Residues 119–139 (LGIVLTAVVVITGCFSYFQEA) form a helical membrane-spanning segment. Residues 140–275 (KSSKIMESFK…TGKTPIAVEI (136 aa)) are Cytoplasmic-facing. Residues 201-216 (DNSSLTGESEPQSRSP) show a composition bias toward polar residues. The disordered stretch occupies residues 201-221 (DNSSLTGESEPQSRSPDCTHD). Residues 276–295 (EHFIHIITGVAVFLGVTFFI) form a helical membrane-spanning segment. Over 296–307 (LAIILGYTWLKA) the chain is Extracellular. A helical transmembrane segment spans residues 308–325 (VIFLIGIIVANVPEGLLA). Over 326-759 (TVTVCLTLTA…EEGRLIFDNL (434 aa)) the chain is Cytoplasmic. The active-site 4-aspartylphosphate intermediate is D363. Mg(2+) is bound by residues D704 and D708. Residues 760–779 (KKSIAYTLTSNIPEITPFLF) form a helical membrane-spanning segment. The Extracellular segment spans residues 780–789 (FIIVNIPLAL). Residues 790–810 (GTITILCIDLGTDMGSAISLA) form a helical membrane-spanning segment. Residues 811–830 (YETAESDIMKRQPRNPCRDK) are Cytoplasmic-facing. The chain crosses the membrane as a helical span at residues 831-853 (LVNERLISIAYGQIGMIQALGGF). Topologically, residues 854–905 (FSYFVILAENGFLPSQLVGIRLNWDDRSLNDLEDSYGQQWTYEQRKIVEFTC) are extracellular. Residues 906 to 925 (HTAFFVSIVVVQWADLIICK) traverse the membrane as a helical segment. At 926 to 938 (TRRNSVFQQGMKN) the chain is on the cytoplasmic side. Position 930 is a phosphoserine; by PKA (S930). Residues 939–957 (KILIFGLFEETALAAFLSY) traverse the membrane as a helical segment. The Extracellular portion of the chain corresponds to 958 to 972 (CPGMDVALRMYPLKP). A helical membrane pass occupies residues 973–993 (TWWFWAFPYSFLIFVYDEARK). Residues 994 to 1010 (LILCRNPGGWVEKETYY) lie on the Cytoplasmic side of the membrane.

Belongs to the cation transport ATPase (P-type) (TC 3.A.3) family. Type IIC subfamily. In terms of assembly, the sodium/potassium-transporting ATPase is composed of a catalytic alpha subunit, an auxiliary non-catalytic beta subunit and an additional regulatory subunit.

It is found in the cell membrane. The enzyme catalyses K(+)(out) + Na(+)(in) + ATP + H2O = K(+)(in) + Na(+)(out) + ADP + phosphate + H(+). Functionally, this is the catalytic component of the active enzyme, which catalyzes the hydrolysis of ATP coupled with the exchange of sodium and potassium ions across the plasma membrane. This action creates the electrochemical gradient of sodium and potassium ions, providing the energy for active transport of various nutrients. In Oreochromis mossambicus (Mozambique tilapia), this protein is Sodium/potassium-transporting ATPase subunit alpha-3 (atp1a3).